We begin with the raw amino-acid sequence, 457 residues long: Karyogamy meiotic segregation protein 2 (457 aa).

Position 134 is a phosphoserine (serine 134).

As to quaternary structure, interacts with sad1.

Its subcellular location is the cytoplasm. It is found in the cytoskeleton. The protein resides in the microtubule organizing center. The protein localises to the spindle pole body. In Schizosaccharomyces pombe (strain 972 / ATCC 24843) (Fission yeast), this protein is Karyogamy meiotic segregation protein 2 (kms2).